The primary structure comprises 574 residues: Transmembrane glycoprotein NMB (574 aa).

An N-terminal signal peptide occupies residues 1–22; it reads MESLCGVLGFLLLAAGLPLQAA. Residues 23 to 502 lie on the Extracellular side of the membrane; that stretch reads KRFRDVLGHE…DPDSPLRAVN (480 aa). Residues Asn93, Asn134, Asn200, Asn249, Asn275, Asn296, Asn300, Asn306, and Asn312 are each glycosylated (N-linked (GlcNAc...) asparagine). Positions 250–338 constitute a PKD domain; the sequence is LSDEIFLRDL…STPPPPSTPP (89 aa). The segment at 320–353 is disordered; the sequence is PGPCPPPSPSTPPPPSTPPSPPPSPLPTLSTPSP. Positions 321–345 are enriched in pro residues; sequence GPCPPPSPSTPPPPSTPPSPPPSPL. N-linked (GlcNAc...) asparagine glycosylation is found at Asn463 and Asn471. Residues 503 to 523 traverse the membrane as a helical segment; that stretch reads GVLISIGCLAVLVTMVTILLY. The Cytoplasmic portion of the chain corresponds to 524–574; the sequence is KKHKAYKPIGNCPRNTVKGKGLSVLLSHAKAPFFRGDQEKDPLLQDKPRTL. A Phosphoserine modification is found at Ser546. Positions 558 to 560 match the Cell attachment site motif; that stretch reads RGD.

Belongs to the PMEL/NMB family. As to expression, may be up-regulated in bone metastatic breast cancer cells.

The protein localises to the cell membrane. It localises to the melanosome membrane. The protein resides in the early endosome membrane. Functionally, could be a melanogenic enzyme. The protein is Transmembrane glycoprotein NMB (Gpnmb) of Mus musculus (Mouse).